The primary structure comprises 123 residues: Large ribosomal subunit protein uL18 (123 aa).

It belongs to the universal ribosomal protein uL18 family. In terms of assembly, part of the 50S ribosomal subunit; part of the 5S rRNA/L5/L18/L25 subcomplex. Contacts the 5S and 23S rRNAs.

In terms of biological role, this is one of the proteins that bind and probably mediate the attachment of the 5S RNA into the large ribosomal subunit, where it forms part of the central protuberance. The chain is Large ribosomal subunit protein uL18 from Chlamydia pneumoniae (Chlamydophila pneumoniae).